Consider the following 438-residue polypeptide: sn-glycerol-3-phosphate-binding periplasmic protein UgpB (438 aa).

The signal sequence occupies residues 1–23 (MISLRHTALGLALSLAFTGQALA). Sn-glycerol 3-phosphate contacts are provided by tyrosine 65, glutamate 89, serine 144, serine 270, glycine 307, tyrosine 346, and arginine 397.

Belongs to the bacterial solute-binding protein 1 family. The complex is composed of two ATP-binding proteins (UgpC), two transmembrane proteins (UgpA and UgpE) and a solute-binding protein (UgpB).

The protein localises to the periplasm. Functionally, part of the ABC transporter complex UgpBAEC involved in sn-glycerol-3-phosphate (G3P) import. Binds G3P. This chain is sn-glycerol-3-phosphate-binding periplasmic protein UgpB (ugpB), found in Salmonella typhi.